We begin with the raw amino-acid sequence, 211 residues long: Thiamine-phosphate synthase (211 aa).

4-amino-2-methyl-5-(diphosphooxymethyl)pyrimidine is bound by residues 37-41 and N69; that span reads QLRIK. The Mg(2+) site is built by D70 and D89. S108 is a 4-amino-2-methyl-5-(diphosphooxymethyl)pyrimidine binding site. 134–136 serves as a coordination point for 2-[(2R,5Z)-2-carboxy-4-methylthiazol-5(2H)-ylidene]ethyl phosphate; it reads TQT. Residue K137 participates in 4-amino-2-methyl-5-(diphosphooxymethyl)pyrimidine binding. 2-[(2R,5Z)-2-carboxy-4-methylthiazol-5(2H)-ylidene]ethyl phosphate is bound by residues G166 and 186–187; that span reads VS.

The protein belongs to the thiamine-phosphate synthase family. The cofactor is Mg(2+).

The enzyme catalyses 2-[(2R,5Z)-2-carboxy-4-methylthiazol-5(2H)-ylidene]ethyl phosphate + 4-amino-2-methyl-5-(diphosphooxymethyl)pyrimidine + 2 H(+) = thiamine phosphate + CO2 + diphosphate. The catalysed reaction is 2-(2-carboxy-4-methylthiazol-5-yl)ethyl phosphate + 4-amino-2-methyl-5-(diphosphooxymethyl)pyrimidine + 2 H(+) = thiamine phosphate + CO2 + diphosphate. It catalyses the reaction 4-methyl-5-(2-phosphooxyethyl)-thiazole + 4-amino-2-methyl-5-(diphosphooxymethyl)pyrimidine + H(+) = thiamine phosphate + diphosphate. The protein operates within cofactor biosynthesis; thiamine diphosphate biosynthesis; thiamine phosphate from 4-amino-2-methyl-5-diphosphomethylpyrimidine and 4-methyl-5-(2-phosphoethyl)-thiazole: step 1/1. In terms of biological role, condenses 4-methyl-5-(beta-hydroxyethyl)thiazole monophosphate (THZ-P) and 2-methyl-4-amino-5-hydroxymethyl pyrimidine pyrophosphate (HMP-PP) to form thiamine monophosphate (TMP). The chain is Thiamine-phosphate synthase from Shigella dysenteriae serotype 1 (strain Sd197).